We begin with the raw amino-acid sequence, 253 residues long: 5-oxoprolinase subunit A (253 aa).

The protein belongs to the LamB/PxpA family. Forms a complex composed of PxpA, PxpB and PxpC.

The catalysed reaction is 5-oxo-L-proline + ATP + 2 H2O = L-glutamate + ADP + phosphate + H(+). Its function is as follows. Catalyzes the cleavage of 5-oxoproline to form L-glutamate coupled to the hydrolysis of ATP to ADP and inorganic phosphate. The polypeptide is 5-oxoprolinase subunit A (Shouchella clausii (strain KSM-K16) (Alkalihalobacillus clausii)).